A 567-amino-acid polypeptide reads, in one-letter code: Urease subunit alpha (567 aa).

One can recognise a Urease domain in the interval 129–567; it reads GGIDTHIHWI…LPMAQRYFLF (439 aa). Positions 134, 136, and 217 each coordinate Ni(2+). Lys-217 is subject to N6-carboxylysine. His-219 contacts substrate. His-246 and His-272 together coordinate Ni(2+). His-320 serves as the catalytic Proton donor. Asp-360 is a binding site for Ni(2+).

This sequence belongs to the metallo-dependent hydrolases superfamily. Urease alpha subunit family. Heterotrimer of UreA (gamma), UreB (beta) and UreC (alpha) subunits. Three heterotrimers associate to form the active enzyme. Ni cation serves as cofactor. In terms of processing, carboxylation allows a single lysine to coordinate two nickel ions.

The protein localises to the cytoplasm. The catalysed reaction is urea + 2 H2O + H(+) = hydrogencarbonate + 2 NH4(+). The protein operates within nitrogen metabolism; urea degradation; CO(2) and NH(3) from urea (urease route): step 1/1. This Klebsiella pneumoniae (strain 342) protein is Urease subunit alpha.